Here is a 395-residue protein sequence, read N- to C-terminus: Xylose isomerase (395 aa).

Catalysis depends on residues His-54 and Asp-57. Positions 181, 217, 220, 245, 255, 257, and 293 each coordinate Mg(2+).

It belongs to the xylose isomerase family. Homotetramer. Mg(2+) is required as a cofactor.

It localises to the cytoplasm. It catalyses the reaction alpha-D-xylose = alpha-D-xylulofuranose. The chain is Xylose isomerase (xylA) from Arthrobacter sp. (strain NRRL B3728).